The primary structure comprises 31 residues: Photosystem II reaction center protein T (31 aa).

A helical membrane pass occupies residues 3 to 23 (SVAYIVVLTMALAVLFFAIAF).

This sequence belongs to the PsbT family. As to quaternary structure, PSII is composed of 1 copy each of membrane proteins PsbA, PsbB, PsbC, PsbD, PsbE, PsbF, PsbH, PsbI, PsbJ, PsbK, PsbL, PsbM, PsbT, PsbX, PsbY, PsbZ, Psb30/Ycf12, peripheral proteins PsbO, CyanoQ (PsbQ), PsbU, PsbV and a large number of cofactors. It forms dimeric complexes.

It is found in the cellular thylakoid membrane. Its function is as follows. Found at the monomer-monomer interface of the photosystem II (PS II) dimer, plays a role in assembly and dimerization of PSII. PSII is a light-driven water plastoquinone oxidoreductase, using light energy to abstract electrons from H(2)O, generating a proton gradient subsequently used for ATP formation. The polypeptide is Photosystem II reaction center protein T (Crocosphaera subtropica (strain ATCC 51142 / BH68) (Cyanothece sp. (strain ATCC 51142))).